A 124-amino-acid chain; its full sequence is Small ribosomal subunit protein bS6 (124 aa).

A disordered region spans residues 99-124; sequence PLPAPRIVPGSEPEPVQQQEAAAVEA. Over residues 111–124 the composition is skewed to low complexity; it reads PEPVQQQEAAAVEA.

The protein belongs to the bacterial ribosomal protein bS6 family.

In terms of biological role, binds together with bS18 to 16S ribosomal RNA. The chain is Small ribosomal subunit protein bS6 from Prochlorococcus marinus (strain MIT 9313).